The sequence spans 406 residues: Bifunctional enzyme IspD/IspF (406 aa).

Residues 1 to 247 (MSLIRVNGEA…ALFFNPAKDT (247 aa)) form a 2-C-methyl-D-erythritol 4-phosphate cytidylyltransferase region. The tract at residues 248–406 (FIGMGFDTHA…HVSMRYKQKL (159 aa)) is 2-C-methyl-D-erythritol 2,4-cyclodiphosphate synthase. Positions 254 and 256 each coordinate a divalent metal cation. 4-CDP-2-C-methyl-D-erythritol 2-phosphate contacts are provided by residues 254 to 256 (DTH) and 280 to 281 (HS). Residue histidine 288 coordinates a divalent metal cation. Residues 302–304 (DIG), 307–311 (FPDND), 378–381 (TTME), phenylalanine 385, and lysine 388 each bind 4-CDP-2-C-methyl-D-erythritol 2-phosphate.

In the N-terminal section; belongs to the IspD/TarI cytidylyltransferase family. IspD subfamily. It in the C-terminal section; belongs to the IspF family. Requires a divalent metal cation as cofactor.

The catalysed reaction is 2-C-methyl-D-erythritol 4-phosphate + CTP + H(+) = 4-CDP-2-C-methyl-D-erythritol + diphosphate. The enzyme catalyses 4-CDP-2-C-methyl-D-erythritol 2-phosphate = 2-C-methyl-D-erythritol 2,4-cyclic diphosphate + CMP. The protein operates within isoprenoid biosynthesis; isopentenyl diphosphate biosynthesis via DXP pathway; isopentenyl diphosphate from 1-deoxy-D-xylulose 5-phosphate: step 2/6. Its pathway is isoprenoid biosynthesis; isopentenyl diphosphate biosynthesis via DXP pathway; isopentenyl diphosphate from 1-deoxy-D-xylulose 5-phosphate: step 4/6. Functionally, bifunctional enzyme that catalyzes the formation of 4-diphosphocytidyl-2-C-methyl-D-erythritol from CTP and 2-C-methyl-D-erythritol 4-phosphate (MEP) (IspD), and catalyzes the conversion of 4-diphosphocytidyl-2-C-methyl-D-erythritol 2-phosphate (CDP-ME2P) to 2-C-methyl-D-erythritol 2,4-cyclodiphosphate (ME-CPP) with a corresponding release of cytidine 5-monophosphate (CMP) (IspF). The protein is Bifunctional enzyme IspD/IspF of Helicobacter pylori (strain P12).